A 133-amino-acid chain; its full sequence is uncharacterized protein (133 aa).

The FAS1 domain maps to 1-130 (MPNIVEIAVS…GIIHVIDNVI (130 aa)).

This is an uncharacterized protein from Synechocystis sp. (strain ATCC 27184 / PCC 6803 / Kazusa).